The chain runs to 514 residues: CBL-interacting protein kinase 25 (514 aa).

The Protein kinase domain occupies 21–281 (YEFGPLVGEG…IPEIMEMRWF (261 aa)). Residues 27–35 (VGEGNFAKV) and Lys-50 contribute to the ATP site. Asp-149 (proton acceptor) is an active-site residue. Residues 167–196 (DFGLSALADMERREAHLQTVCGTPLFLAPE) are activation loop. The segment at 303–340 (GLDGEPELYDSDTDTIESSSSSESPTPVAGTPRGMHTS) is disordered. Residues 304–317 (LDGEPELYDSDTDT) are compositionally biased toward acidic residues. The segment covering 318 to 329 (IESSSSSESPTP) has biased composition (low complexity). Positions 323–395 (SSESPTPVAG…PSFDLSGLFE (73 aa)) constitute an NAF domain. Residues 398–427 (GERMRFVSGAPVADIIAKLQEIAGMVSFTA) are PPI.

The protein belongs to the protein kinase superfamily. CAMK Ser/Thr protein kinase family. SNF1 subfamily. Requires Mn(2+) as cofactor.

The enzyme catalyses L-seryl-[protein] + ATP = O-phospho-L-seryl-[protein] + ADP + H(+). It catalyses the reaction L-threonyl-[protein] + ATP = O-phospho-L-threonyl-[protein] + ADP + H(+). In terms of biological role, CIPK serine-threonine protein kinases interact with CBL proteins. Binding of a CBL protein to the regulatory NAF domain of CIPK protein lead to the activation of the kinase in a calcium-dependent manner. In Oryza sativa subsp. japonica (Rice), this protein is CBL-interacting protein kinase 25 (CIPK25).